Reading from the N-terminus, the 174-residue chain is MTIILGIDPGSRVTGYGLIKESDRKIAYIDSGCIRTSNDVELSHKLLQIYDGICELMDHYSPTEVAIEQIFMHNNPNSALKLGHARGVAMVAAASHRVKICEYSAREIKQSVVGYGAAEKDQVSHMVVELLQLNRAPQKDAADALAIAICHSHMRNGLSKLIGSRGTKRRRMRL.

Catalysis depends on residues aspartate 8, glutamate 68, and aspartate 140. 3 residues coordinate Mg(2+): aspartate 8, glutamate 68, and aspartate 140.

Belongs to the RuvC family. As to quaternary structure, homodimer which binds Holliday junction (HJ) DNA. The HJ becomes 2-fold symmetrical on binding to RuvC with unstacked arms; it has a different conformation from HJ DNA in complex with RuvA. In the full resolvosome a probable DNA-RuvA(4)-RuvB(12)-RuvC(2) complex forms which resolves the HJ. Mg(2+) serves as cofactor.

The protein localises to the cytoplasm. The enzyme catalyses Endonucleolytic cleavage at a junction such as a reciprocal single-stranded crossover between two homologous DNA duplexes (Holliday junction).. In terms of biological role, the RuvA-RuvB-RuvC complex processes Holliday junction (HJ) DNA during genetic recombination and DNA repair. Endonuclease that resolves HJ intermediates. Cleaves cruciform DNA by making single-stranded nicks across the HJ at symmetrical positions within the homologous arms, yielding a 5'-phosphate and a 3'-hydroxyl group; requires a central core of homology in the junction. The consensus cleavage sequence is 5'-(A/T)TT(C/G)-3'. Cleavage occurs on the 3'-side of the TT dinucleotide at the point of strand exchange. HJ branch migration catalyzed by RuvA-RuvB allows RuvC to scan DNA until it finds its consensus sequence, where it cleaves and resolves the cruciform DNA. This is Crossover junction endodeoxyribonuclease RuvC from Legionella pneumophila (strain Lens).